The primary structure comprises 140 residues: Bacilliredoxin STH2395 (140 aa).

This sequence belongs to the bacilliredoxin family.

The chain is Bacilliredoxin STH2395 from Symbiobacterium thermophilum (strain DSM 24528 / JCM 14929 / IAM 14863 / T).